Consider the following 290-residue polypeptide: Purine nucleoside phosphorylase (290 aa).

Arginine 68–asparagine 69 is a binding site for phosphate. Methionine 204 lines the substrate pocket. Phosphate is bound at residue threonine 205.

This sequence belongs to the PNP/MTAP phosphorylase family. MTAP subfamily. Homotrimer.

It is found in the cytoplasm. The protein localises to the nucleus. It carries out the reaction a purine D-ribonucleoside + phosphate = a purine nucleobase + alpha-D-ribose 1-phosphate. It participates in purine metabolism; purine nucleoside salvage. Its function is as follows. Purine nucleoside phosphorylase involved in purine salvage. This Drosophila melanogaster (Fruit fly) protein is Purine nucleoside phosphorylase.